A 210-amino-acid chain; its full sequence is Nucleoside triphosphate pyrophosphatase (210 aa).

D80 acts as the Proton acceptor in catalysis.

Belongs to the Maf family. The cofactor is a divalent metal cation.

The protein localises to the cytoplasm. The enzyme catalyses a ribonucleoside 5'-triphosphate + H2O = a ribonucleoside 5'-phosphate + diphosphate + H(+). It carries out the reaction a 2'-deoxyribonucleoside 5'-triphosphate + H2O = a 2'-deoxyribonucleoside 5'-phosphate + diphosphate + H(+). In terms of biological role, nucleoside triphosphate pyrophosphatase. May have a dual role in cell division arrest and in preventing the incorporation of modified nucleotides into cellular nucleic acids. The polypeptide is Nucleoside triphosphate pyrophosphatase (Mycobacterium sp. (strain JLS)).